A 585-amino-acid polypeptide reads, in one-letter code: Nitrogen permease regulator 3-like protein (585 aa).

A disordered region spans residues 117–157 (GEWAKRRKPRTTVESNASSSHLVSKPESSHPSTGSFEVKSS). A compositionally biased stretch (polar residues) spans 128–138 (TVESNASSSHL). The span at 148–157 (STGSFEVKSS) shows a compositional bias: low complexity.

The protein belongs to the NPR3 family.

The sequence is that of Nitrogen permease regulator 3-like protein from Schizosaccharomyces pombe (strain 972 / ATCC 24843) (Fission yeast).